Reading from the N-terminus, the 509-residue chain is 2,3-bisphosphoglycerate-independent phosphoglycerate mutase (509 aa).

Aspartate 11 provides a ligand contact to Mn(2+). Tyrosine 35 bears the Phosphotyrosine mark. Mn(2+) is bound at residue serine 61. The Phosphoserine intermediate role is filled by serine 61. Substrate is bound by residues histidine 122, 152 to 153 (RD), arginine 184, arginine 190, 260 to 263 (RPDR), and lysine 335. 5 residues coordinate Mn(2+): aspartate 402, histidine 406, aspartate 443, histidine 444, and histidine 461.

The protein belongs to the BPG-independent phosphoglycerate mutase family. Monomer. Requires Mn(2+) as cofactor.

It catalyses the reaction (2R)-2-phosphoglycerate = (2R)-3-phosphoglycerate. It functions in the pathway carbohydrate degradation; glycolysis; pyruvate from D-glyceraldehyde 3-phosphate: step 3/5. Essential for rapid growth and for sporulation. Catalyzes the interconversion of 2-phosphoglycerate and 3-phosphoglycerate. This is 2,3-bisphosphoglycerate-independent phosphoglycerate mutase from Bacillus cereus (strain ATCC 14579 / DSM 31 / CCUG 7414 / JCM 2152 / NBRC 15305 / NCIMB 9373 / NCTC 2599 / NRRL B-3711).